A 551-amino-acid polypeptide reads, in one-letter code: Chaperonin GroEL (551 aa).

Residues 30 to 33 (TLGP), K51, 87 to 91 (DGTTT), G415, 479 to 481 (NAA), and D495 each bind ATP. Residues 523 to 551 (DSPKEDKSSDMPSPSAGGMGGMGGMGGMM) form a disordered region. A compositionally biased stretch (gly residues) spans 539 to 551 (GGMGGMGGMGGMM).

It belongs to the chaperonin (HSP60) family. In terms of assembly, forms a cylinder of 14 subunits composed of two heptameric rings stacked back-to-back. Interacts with the co-chaperonin GroES.

It is found in the cytoplasm. The catalysed reaction is ATP + H2O + a folded polypeptide = ADP + phosphate + an unfolded polypeptide.. Its function is as follows. Together with its co-chaperonin GroES, plays an essential role in assisting protein folding. The GroEL-GroES system forms a nano-cage that allows encapsulation of the non-native substrate proteins and provides a physical environment optimized to promote and accelerate protein folding. This is Chaperonin GroEL from Buchnera aphidicola subsp. Chaetophorus leucomelas.